The chain runs to 213 residues: dTTP/UTP pyrophosphatase (213 aa).

The active-site Proton acceptor is the Asp92.

It belongs to the Maf family. YhdE subfamily. Requires a divalent metal cation as cofactor.

Its subcellular location is the cytoplasm. It carries out the reaction dTTP + H2O = dTMP + diphosphate + H(+). The enzyme catalyses UTP + H2O = UMP + diphosphate + H(+). In terms of biological role, nucleoside triphosphate pyrophosphatase that hydrolyzes dTTP and UTP. May have a dual role in cell division arrest and in preventing the incorporation of modified nucleotides into cellular nucleic acids. In Granulibacter bethesdensis (strain ATCC BAA-1260 / CGDNIH1), this protein is dTTP/UTP pyrophosphatase.